Consider the following 199-residue polypeptide: NADH-quinone oxidoreductase subunit C (199 aa).

It belongs to the complex I 30 kDa subunit family. NDH-1 is composed of 14 different subunits. Subunits NuoB, C, D, E, F, and G constitute the peripheral sector of the complex.

It is found in the cell inner membrane. The catalysed reaction is a quinone + NADH + 5 H(+)(in) = a quinol + NAD(+) + 4 H(+)(out). Its function is as follows. NDH-1 shuttles electrons from NADH, via FMN and iron-sulfur (Fe-S) centers, to quinones in the respiratory chain. The immediate electron acceptor for the enzyme in this species is believed to be ubiquinone. Couples the redox reaction to proton translocation (for every two electrons transferred, four hydrogen ions are translocated across the cytoplasmic membrane), and thus conserves the redox energy in a proton gradient. In Cupriavidus taiwanensis (strain DSM 17343 / BCRC 17206 / CCUG 44338 / CIP 107171 / LMG 19424 / R1) (Ralstonia taiwanensis (strain LMG 19424)), this protein is NADH-quinone oxidoreductase subunit C.